Consider the following 154-residue polypeptide: uncharacterized protein (154 aa).

It localises to the mitochondrion. This is an uncharacterized protein from Marchantia polymorpha (Common liverwort).